Consider the following 157-residue polypeptide: MARTEYSNKLTGDNIARAKANELGCSPKHAVEIAHLVRNMMADDAVAYLEQVIDLKRAVPFHRFNRNVSHQKSLNGKTFGTAAGRYPVKAAAEYVRLIRSAQKNAEYAGLAPEKMVIIHAAANKGRCIKGIFPRAMGRATPKHKDSVNVEIILREVQ.

It belongs to the universal ribosomal protein uL22 family. As to quaternary structure, part of the 50S ribosomal subunit.

In terms of biological role, this protein binds specifically to 23S rRNA. It makes multiple contacts with different domains of the 23S rRNA in the assembled 50S subunit and ribosome. Functionally, the globular domain of the protein is located near the polypeptide exit tunnel on the outside of the subunit, while an extended beta-hairpin is found that lines the wall of the exit tunnel in the center of the 70S ribosome. The protein is Large ribosomal subunit protein uL22 of Methanocorpusculum labreanum (strain ATCC 43576 / DSM 4855 / Z).